Consider the following 152-residue polypeptide: Endoribonuclease YbeY (152 aa).

The Zn(2+) site is built by H117, H121, and H127.

It belongs to the endoribonuclease YbeY family. The cofactor is Zn(2+).

The protein resides in the cytoplasm. Its function is as follows. Single strand-specific metallo-endoribonuclease involved in late-stage 70S ribosome quality control and in maturation of the 3' terminus of the 16S rRNA. This chain is Endoribonuclease YbeY, found in Borreliella afzelii (strain PKo) (Borrelia afzelii).